Here is a 569-residue protein sequence, read N- to C-terminus: Sialic acid-binding Ig-like lectin 5 (569 aa).

An N-terminal signal peptide occupies residues 1 to 16; it reads MRWAWLLPLLWAGCLA. The Extracellular portion of the chain corresponds to 17–439; sequence TDGYSLSVTG…KSETSRGTVL (423 aa). The 99-residue stretch at 18-116 folds into the Ig-like V-type domain; it reads DGYSLSVTGS…DTGTYFFRLD (99 aa). Disulfide bonds link C35–C163, C40–C96, C157–C206, and C265–C308. N95 is a glycosylation site (N-linked (GlcNAc...) asparagine). Residues R114, K120, and S122 each coordinate N-acetylneuraminate. Ig-like C2-type domains are found at residues 139–224 and 229–324; these read PNIQ…QQLS and PQKM…VSLS. N151, N200, and N203 each carry an N-linked (GlcNAc...) asparagine glycan. N-linked (GlcNAc...) asparagine glycosylation is found at N369, N372, and N387. A helical membrane pass occupies residues 440–460; that stretch reads GAIWGAGLMALLAVCLCLIFF. Topologically, residues 461-569 are cytoplasmic; sequence TVKVLRKKSA…VYTEIKIHKC (109 aa). A disordered region spans residues 508–556; it reads HLNEPGSQTQKEQPPLATVPDTQKDEPELHYASLSFQGPMPPKPQNTEA. The ITIM motif motif lies at 536-541; that stretch reads LHYASL. An SLAM-like motif motif is present at residues 559–564; sequence SVYTEI.

The protein belongs to the immunoglobulin superfamily. SIGLEC (sialic acid binding Ig-like lectin) family. Predominantly expressed by immature monocytic/myeloid lineage cells in bone marrow. Also found at lower levels in mature neutrophils and monocytes.

It localises to the membrane. Functionally, putative adhesion molecule that mediates sialic-acid dependent binding to cells. Preferentially binds to alpha-2,3-linked sialic acid. The sialic acid recognition site may be masked by cis interactions with sialic acids on the same cell surface. The chain is Sialic acid-binding Ig-like lectin 5 (Siglec5) from Mus musculus (Mouse).